Here is a 277-residue protein sequence, read N- to C-terminus: GPALPP motifs-containing protein 1 (277 aa).

The disordered stretch occupies residues 1–240 (MARDLIGPAL…VWTDTPADRE (240 aa)). Position 2 is an N-acetylalanine (Ala2). Positions 7-12 (GPALPP) match the GPALPP motif 1 motif. Ser28 is subject to Phosphoserine. The GPALPP motif 2 signature appears at 32–37 (GPALPP). 2 stretches are compositionally biased toward acidic residues: residues 60-69 (GNQESEEDDT) and 81-90 (DDDDDDDDEG). A GPALPP motif 3 motif is present at residues 93–98 (GPALPP). The residue at position 106 (Ser106) is a Phosphoserine. Residues 108–117 (PRPMIGPALP) show a composition bias toward pro residues. The short motif at 113–118 (GPALPP) is the GPALPP motif 4 element. Phosphoserine is present on residues Ser138 and Ser143. Residue Thr147 is modified to Phosphothreonine. Ser149 and Ser150 each carry phosphoserine. Residues 172–196 (EFEKRAQRMKEKLTKGDDDSSKPIT) show a composition bias toward basic and acidic residues.

The sequence is that of GPALPP motifs-containing protein 1 (GPALPP1) from Bos taurus (Bovine).